The chain runs to 352 residues: Biotin synthase (352 aa).

The region spanning 44 to 262 (NRVQVSTLLS…LAVARLLMPK (219 aa)) is the Radical SAM core domain. Residues C59, C63, and C66 each contribute to the [4Fe-4S] cluster site. [2Fe-2S] cluster contacts are provided by C103, C134, C194, and R266.

Belongs to the radical SAM superfamily. Biotin synthase family. As to quaternary structure, homodimer. It depends on [4Fe-4S] cluster as a cofactor. [2Fe-2S] cluster is required as a cofactor.

It catalyses the reaction (4R,5S)-dethiobiotin + (sulfur carrier)-SH + 2 reduced [2Fe-2S]-[ferredoxin] + 2 S-adenosyl-L-methionine = (sulfur carrier)-H + biotin + 2 5'-deoxyadenosine + 2 L-methionine + 2 oxidized [2Fe-2S]-[ferredoxin]. Its pathway is cofactor biosynthesis; biotin biosynthesis; biotin from 7,8-diaminononanoate: step 2/2. Its function is as follows. Catalyzes the conversion of dethiobiotin (DTB) to biotin by the insertion of a sulfur atom into dethiobiotin via a radical-based mechanism. This is Biotin synthase from Pseudomonas putida (strain W619).